A 205-amino-acid polypeptide reads, in one-letter code: LIM domain-containing protein PLIM2b (205 aa).

LIM zinc-binding domains follow at residues 8–68 (DKCN…LFKE) and 102–162 (DKCA…LFME). Positions 177–205 (RTASGNTLPPEPTEDVAVEAKEENGVSES) are disordered. Residues 194-205 (VEAKEENGVSES) show a composition bias toward basic and acidic residues.

Interacts with F-actin. In terms of tissue distribution, predominantly expressed in flowers and in pollen grains. Detected in vasculature and roots.

The protein localises to the cytoplasm. It localises to the cytoskeleton. In terms of biological role, binds to actin filaments and promotes cross-linking into thick bundles. Has an actin-stabilizing activity. The actin regulatory activities are inhibited by pH &gt; 6.8 but are [Ca(2+)] independent. The polypeptide is LIM domain-containing protein PLIM2b (Arabidopsis thaliana (Mouse-ear cress)).